Reading from the N-terminus, the 321-residue chain is Lipoyl synthase (321 aa).

The [4Fe-4S] cluster site is built by C68, C73, C79, C94, C98, C101, and S308. The 218-residue stretch at 80 to 297 (FNHGTATFMI…KVLADELGFT (218 aa)) folds into the Radical SAM core domain.

It belongs to the radical SAM superfamily. Lipoyl synthase family. The cofactor is [4Fe-4S] cluster.

It is found in the cytoplasm. It catalyses the reaction [[Fe-S] cluster scaffold protein carrying a second [4Fe-4S](2+) cluster] + N(6)-octanoyl-L-lysyl-[protein] + 2 oxidized [2Fe-2S]-[ferredoxin] + 2 S-adenosyl-L-methionine + 4 H(+) = [[Fe-S] cluster scaffold protein] + N(6)-[(R)-dihydrolipoyl]-L-lysyl-[protein] + 4 Fe(3+) + 2 hydrogen sulfide + 2 5'-deoxyadenosine + 2 L-methionine + 2 reduced [2Fe-2S]-[ferredoxin]. It functions in the pathway protein modification; protein lipoylation via endogenous pathway; protein N(6)-(lipoyl)lysine from octanoyl-[acyl-carrier-protein]: step 2/2. Catalyzes the radical-mediated insertion of two sulfur atoms into the C-6 and C-8 positions of the octanoyl moiety bound to the lipoyl domains of lipoate-dependent enzymes, thereby converting the octanoylated domains into lipoylated derivatives. The chain is Lipoyl synthase from Shewanella sp. (strain MR-7).